The following is a 180-amino-acid chain: MASTVSAYKEKMKELSVLSLICSCFYSQPHPNTIYQYGDMEVKQLDKRASGQSFEVILKSPSDLSPESPVLSSPPKRKDASLEELQKRLEAAEERRKTQEAQVLKQLAERREHEREVLHKALEENNNFSRLAEEKLNYKMELSKEIREAHLAALRERLREKELHAAEVRRNKEQREEMSG.

Residues Cys22 and Cys24 are each lipidated (S-palmitoyl cysteine). Positions 38 to 180 (GDMEVKQLDK…NKEQREEMSG (143 aa)) constitute an SLD domain. A phosphoserine mark is found at Ser50, Ser60, Ser65, Ser68, Ser72, Ser73, and Ser81. The span at 60–74 (SPSDLSPESPVLSSP) shows a compositional bias: low complexity. The disordered stretch occupies residues 60 to 81 (SPSDLSPESPVLSSPPKRKDAS). Residues 75–179 (PKRKDASLEE…RNKEQREEMS (105 aa)) are a coiled coil.

The protein belongs to the stathmin family. Interacts with STAT3. Interacts with CLU (secreted form); this interaction may act as an important modulator during neuronal differentiation. Post-translationally, N-terminal palmitoylation promotes specific anchoring to the cytosolic leaflet of Golgi membranes and subsequent vesicular trafficking along dendrites and axons. Neuronal Stathmins are substrates for palmitoyltransferases ZDHHC3, ZDHHC7 and ZDHHC15. As to expression, neuron specific.

The protein resides in the golgi apparatus. It localises to the cell projection. The protein localises to the growth cone. It is found in the axon. Its subcellular location is the cytoplasm. The protein resides in the cytosol. Exhibits microtubule-destabilizing activity, which is antagonized by STAT3. In Mus musculus (Mouse), this protein is Stathmin-3 (Stmn3).